The sequence spans 186 residues: Ribosome rescue factor SmrB (186 aa).

Residues 99–174 (IDLHGLTQHQ…SDAAIIVIIE (76 aa)) enclose the Smr domain.

This sequence belongs to the SmrB family. In terms of assembly, associates with collided ribosomes, but not with correctly translating polysomes.

In terms of biological role, acts as a ribosome collision sensor. Detects stalled/collided disomes (pairs of ribosomes where the leading ribosome is stalled and a second ribosome has collided with it) and endonucleolytically cleaves mRNA at the 5' boundary of the stalled ribosome. Stalled/collided disomes form a new interface (primarily via the 30S subunits) that binds SmrB. Cleaved mRNA becomes available for tmRNA ligation, leading to ribosomal subunit dissociation and rescue of stalled ribosomes. The polypeptide is Ribosome rescue factor SmrB (Buchnera aphidicola subsp. Acyrthosiphon pisum (strain 5A)).